Reading from the N-terminus, the 84-residue chain is Small ribosomal subunit protein bS18 (84 aa).

The protein belongs to the bacterial ribosomal protein bS18 family. Part of the 30S ribosomal subunit. Forms a tight heterodimer with protein bS6.

Binds as a heterodimer with protein bS6 to the central domain of the 16S rRNA, where it helps stabilize the platform of the 30S subunit. In Dictyoglomus turgidum (strain DSM 6724 / Z-1310), this protein is Small ribosomal subunit protein bS18.